Reading from the N-terminus, the 173-residue chain is MTYFVLFLGLCFVLGSLAVASNPSPYYGVVGLVLASIAGCGWLLSLGVSFVSLVLFMVYLGGMLVVFVYSVSLAADPFPEAWGDWGVVGYGVGFVAVLMVGLIVGGFVGSLDFGVATVDSVGMFSVRLNFSGVAMFYSCGVGMFLVAGWGLLLTLFVVLELVRGLSRGAIRAV.

5 consecutive transmembrane segments (helical) span residues 1-21 (MTYF…AVAS), 27-47 (YGVV…LSLG), 48-68 (VSFV…VVFV), 87-107 (VVGY…VGGF), and 139-159 (CGVG…FVVL).

Belongs to the complex I subunit 6 family.

It localises to the mitochondrion membrane. The enzyme catalyses a ubiquinone + NADH + 5 H(+)(in) = a ubiquinol + NAD(+) + 4 H(+)(out). Core subunit of the mitochondrial membrane respiratory chain NADH dehydrogenase (Complex I) that is believed to belong to the minimal assembly required for catalysis. Complex I functions in the transfer of electrons from NADH to the respiratory chain. The immediate electron acceptor for the enzyme is believed to be ubiquinone. The chain is NADH-ubiquinone oxidoreductase chain 6 (MT-ND6) from Aethia cristatella (Crested auklet).